We begin with the raw amino-acid sequence, 1124 residues long: Eukaryotic translation initiation factor 3 subunit A (1124 aa).

Positions 96 to 124 form a coiled coil; that stretch reads LKMAEERTEQAQQQSSQATVDIDDLDNLA. Positions 317 to 498 constitute a PCI domain; sequence IQRMTTHVLI…ECVHFGTDLS (182 aa). Composition is skewed to basic and acidic residues over residues 812 to 851 and 860 to 883; these read EERRRIEEELRKQKEEADRIERERRAEERRIQDEKNRQLA and EVERRRREELEQMKEADGRRERRP. Residues 812 to 1124 form a disordered region; sequence EERRRIEEEL…EEGWTDVKHR (313 aa). Positions 900–910 are enriched in low complexity; the sequence is PAAAAPANPAA. Basic and acidic residues-rich tracts occupy residues 928 to 952, 960 to 990, 1007 to 1048, and 1063 to 1100; these read PRERGGETGPKDKWRTGPEDHEKDG, RGGDMRRGQDDRGPIRRGGGEERGEREDRGP, PRRD…RGGG, and DDNRRGPRDEGRQDTWRNTRQDAAPKQKEDRPQREARP.

The protein belongs to the eIF-3 subunit A family. As to quaternary structure, component of the eukaryotic translation initiation factor 3 (eIF-3) complex.

The protein localises to the cytoplasm. Functionally, RNA-binding component of the eukaryotic translation initiation factor 3 (eIF-3) complex, which is involved in protein synthesis of a specialized repertoire of mRNAs and, together with other initiation factors, stimulates binding of mRNA and methionyl-tRNAi to the 40S ribosome. The eIF-3 complex specifically targets and initiates translation of a subset of mRNAs involved in cell proliferation. This is Eukaryotic translation initiation factor 3 subunit A from Anopheles gambiae (African malaria mosquito).